A 544-amino-acid polypeptide reads, in one-letter code: Phenylalanine--tRNA ligase beta subunit (544 aa).

Positions 270–346 constitute a B5 domain; that stretch reads LEPKTRFLTK…KGYGYENIKV (77 aa). Mg(2+) contacts are provided by Asp324, Asp330, Glu333, and Asp334.

Belongs to the phenylalanyl-tRNA synthetase beta subunit family. Type 2 subfamily. Tetramer of two alpha and two beta subunits. Mg(2+) is required as a cofactor.

Its subcellular location is the cytoplasm. The catalysed reaction is tRNA(Phe) + L-phenylalanine + ATP = L-phenylalanyl-tRNA(Phe) + AMP + diphosphate + H(+). The protein is Phenylalanine--tRNA ligase beta subunit of Methanosarcina barkeri (strain Fusaro / DSM 804).